The sequence spans 239 residues: MEIFPAIDLKEGRCVRLYQGEFSKETVMNEDPVAQAIIFEKLGAEILHIVDLDGAIAGESLNLPVIEKICKAVRIPVQVGGGIRSLVAVEKLLSVGVEKVILGTAALYDKSFLEEAVRLYKEKIIVGIDAKNGFVATRGWLDLSEISYISLAKQMESLGVQTIVFTDISKDGTLAGPNFEQLALLQKSVGIRLIASGGVASIQDVKKLNDMNIYGVIIGKALYEKTIDLEEVLQVTKLC.

The active-site Proton acceptor is D8. D129 acts as the Proton donor in catalysis.

The protein belongs to the HisA/HisF family.

The protein localises to the cytoplasm. It catalyses the reaction 1-(5-phospho-beta-D-ribosyl)-5-[(5-phospho-beta-D-ribosylamino)methylideneamino]imidazole-4-carboxamide = 5-[(5-phospho-1-deoxy-D-ribulos-1-ylimino)methylamino]-1-(5-phospho-beta-D-ribosyl)imidazole-4-carboxamide. Its pathway is amino-acid biosynthesis; L-histidine biosynthesis; L-histidine from 5-phospho-alpha-D-ribose 1-diphosphate: step 4/9. In Bacillus cereus (strain B4264), this protein is 1-(5-phosphoribosyl)-5-[(5-phosphoribosylamino)methylideneamino] imidazole-4-carboxamide isomerase.